Reading from the N-terminus, the 180-residue chain is Ribulose bisphosphate carboxylase small subunit, chloroplastic 1 (180 aa).

A chloroplast-targeting transit peptide spans 1–56 (MASSVISSAAVATRTNVAQASMVAPFNGLKSAVSFPVSSKQNLDITSIASNGGRVQ).

This sequence belongs to the RuBisCO small chain family. As to quaternary structure, heterohexadecamer of 8 large and 8 small subunits.

It is found in the plastid. The protein localises to the chloroplast. Functionally, ruBisCO catalyzes two reactions: the carboxylation of D-ribulose 1,5-bisphosphate, the primary event in carbon dioxide fixation, as well as the oxidative fragmentation of the pentose substrate. Both reactions occur simultaneously and in competition at the same active site. Although the small subunit is not catalytic it is essential for maximal activity. This chain is Ribulose bisphosphate carboxylase small subunit, chloroplastic 1, found in Petunia hybrida (Petunia).